A 376-amino-acid chain; its full sequence is Dual-specificity RNA methyltransferase RlmN (376 aa).

Glu95 serves as the catalytic Proton acceptor. Positions 101–339 (EKERATLCVS…CIVRRPRGDD (239 aa)) constitute a Radical SAM core domain. Cys108 and Cys344 are oxidised to a cystine. [4Fe-4S] cluster-binding residues include Cys115, Cys119, and Cys122. Residues 169-170 (GE), Ser201, 223-225 (SLH), and Asn301 each bind S-adenosyl-L-methionine. Residue Cys344 is the S-methylcysteine intermediate of the active site.

The protein belongs to the radical SAM superfamily. RlmN family. Requires [4Fe-4S] cluster as cofactor.

Its subcellular location is the cytoplasm. It carries out the reaction adenosine(2503) in 23S rRNA + 2 reduced [2Fe-2S]-[ferredoxin] + 2 S-adenosyl-L-methionine = 2-methyladenosine(2503) in 23S rRNA + 5'-deoxyadenosine + L-methionine + 2 oxidized [2Fe-2S]-[ferredoxin] + S-adenosyl-L-homocysteine. The enzyme catalyses adenosine(37) in tRNA + 2 reduced [2Fe-2S]-[ferredoxin] + 2 S-adenosyl-L-methionine = 2-methyladenosine(37) in tRNA + 5'-deoxyadenosine + L-methionine + 2 oxidized [2Fe-2S]-[ferredoxin] + S-adenosyl-L-homocysteine. Its function is as follows. Specifically methylates position 2 of adenine 2503 in 23S rRNA and position 2 of adenine 37 in tRNAs. m2A2503 modification seems to play a crucial role in the proofreading step occurring at the peptidyl transferase center and thus would serve to optimize ribosomal fidelity. This is Dual-specificity RNA methyltransferase RlmN from Pseudoalteromonas translucida (strain TAC 125).